A 193-amino-acid polypeptide reads, in one-letter code: Flagellar transcriptional regulator FlhC (193 aa).

Residues Cys138, Cys141, Cys158, and Cys161 each contribute to the Zn(2+) site.

Belongs to the FlhC family. In terms of assembly, heterohexamer composed of two FlhC and four FlhD subunits. Each FlhC binds a FlhD dimer, forming a heterotrimer, and a hexamer assembles by dimerization of two heterotrimers. Zn(2+) serves as cofactor.

The protein resides in the cytoplasm. Functions in complex with FlhD as a master transcriptional regulator that regulates transcription of several flagellar and non-flagellar operons by binding to their promoter region. Activates expression of class 2 flagellar genes, including fliA, which is a flagellum-specific sigma factor that turns on the class 3 genes. Also regulates genes whose products function in a variety of physiological pathways. This chain is Flagellar transcriptional regulator FlhC, found in Proteus mirabilis.